Reading from the N-terminus, the 1017-residue chain is Protein translocase subunit SecA 1 (1017 aa).

Residues Gln143, 161–165 (GEGKT), and Asp661 each bind ATP. The tract at residues 978 to 999 (GLNDDDEPLPAQPITTEQKPGR) is disordered. Residues Cys1003, Cys1005, Cys1014, and Cys1015 each coordinate Zn(2+).

Belongs to the SecA family. In terms of assembly, monomer and homodimer. Part of the essential Sec protein translocation apparatus which comprises SecA, SecYEG and auxiliary proteins SecDF. Other proteins may also be involved. Zn(2+) serves as cofactor.

The protein localises to the cell inner membrane. Its subcellular location is the cytoplasm. The catalysed reaction is ATP + H2O + cellular proteinSide 1 = ADP + phosphate + cellular proteinSide 2.. Part of the Sec protein translocase complex. Interacts with the SecYEG preprotein conducting channel. Has a central role in coupling the hydrolysis of ATP to the transfer of proteins into and across the cell membrane, serving as an ATP-driven molecular motor driving the stepwise translocation of polypeptide chains across the membrane. The sequence is that of Protein translocase subunit SecA 1 from Chlorobium chlorochromatii (strain CaD3).